A 287-amino-acid chain; its full sequence is F420-non-reducing hydrogenase vhu subunit G (287 aa).

Belongs to the [NiFe]/[NiFeSe] hydrogenase small subunit family. As to quaternary structure, the F420-non-reducing hydrogenase vhu is composed of four subunits; VhuA, VhuD, VhuG and VhuU.

The protein is F420-non-reducing hydrogenase vhu subunit G (vhuG) of Methanococcus voltae.